Consider the following 85-residue polypeptide: MAHKKGVGSSKNGRESESKRLGVKVYGGEMAKAGNILVRQRGTVHHPGENVGIGKDHTLYALKSGVVVFTRKKNDRSYVSIKTES.

The segment at 1 to 21 (MAHKKGVGSSKNGRESESKRL) is disordered.

Belongs to the bacterial ribosomal protein bL27 family.

The protein is Large ribosomal subunit protein bL27 of Porphyromonas gingivalis (strain ATCC 33277 / DSM 20709 / CIP 103683 / JCM 12257 / NCTC 11834 / 2561).